Reading from the N-terminus, the 139-residue chain is Angiogenin (139 aa).

Residues 1 to 21 (MAMSSLWWTAILLLALTVSMC) form the signal peptide. Residue histidine 34 is the Proton acceptor of the active site. Cystine bridges form between cysteine 49–cysteine 102, cysteine 64–cysteine 111, and cysteine 82–cysteine 126. TRNA is bound by residues cysteine 102 and valine 122. Histidine 133 (proton donor) is an active-site residue.

It belongs to the pancreatic ribonuclease family. As to quaternary structure, homodimer. Interacts with RNH1; inhibiting ANG ribonuclease activity.

It is found in the secreted. The protein resides in the nucleus. Its subcellular location is the nucleolus. It localises to the cytoplasm. The protein localises to the stress granule. Functionally, secreted ribonuclease that can either promote or restrict cell proliferation of target cells, depending on the context. Endocytosed in target cells via its receptor PLXNB2 and translocates to the cytoplasm or nucleus. Under stress conditions, localizes to the cytoplasm and promotes the assembly of stress granules (SGs): specifically cleaves a subset of tRNAs within anticodon loops to produce tRNA-derived stress-induced fragments (tiRNAs), resulting in translation repression and inhibition of cell proliferation. tiRNas also prevent formation of apoptosome, thereby promoting cell survival. Preferentially cleaves RNAs between a pyrimidine and an adenosine residue, suggesting that it cleaves the anticodon loop of tRNA(Ala) (32-UUAGCAU-38) after positions 33 and 36. Cleaves a subset of tRNAs, including tRNA(Ala), tRNA(Glu), tRNA(Gly), tRNA(Lys), tRNA(Val), tRNA(His), tRNA(Asp) and tRNA(Sec). Under growth conditions and in differentiated cells, translocates to the nucleus and stimulates ribosomal RNA (rRNA) transcription, including that containing the initiation site sequences of 45S rRNA, thereby promoting cell growth and proliferation. Angiogenin induces vascularization of normal and malignant tissues via its ability to promote rRNA transcription. The sequence is that of Angiogenin (ANG) from Gallus gallus (Chicken).